The primary structure comprises 521 residues: AAA ATPase forming ring-shaped complexes (521 aa).

Positions 4 to 44 (TEDLAALNDRLMAKNHALAEALNRAGKELTKAKSRLAQLAQ) form a coiled coil. Position 235-240 (235-240 (GNGKTM)) interacts with ATP.

The protein belongs to the AAA ATPase family. Homohexamer. Assembles into a hexameric ring structure.

The protein is AAA ATPase forming ring-shaped complexes of Bifidobacterium longum subsp. infantis (strain ATCC 15697 / DSM 20088 / JCM 1222 / NCTC 11817 / S12).